Reading from the N-terminus, the 292-residue chain is Golgi to ER traffic protein 2 (292 aa).

The span at 1 to 18 (MSELSAEEKRKLLRERRQ) shows a compositional bias: basic and acidic residues. A disordered region spans residues 1-80 (MSELSAEEKR…TPLHDDPEVP (80 aa)). Over 1 to 158 (MSELSAEEKR…SQYHAYEQKQ (158 aa)) the chain is Cytoplasmic. Polar residues-rich tracts occupy residues 29–47 (RLNNILSQGSSVKSSNVTS) and 55–71 (ATTTVMDLPSRETQSPT). The helical transmembrane segment at 159-179 (WKARFLVVRWIIHTLNFVYHY) threads the bilayer. The Lumenal portion of the chain corresponds to 180–205 (IASGYKLSASPYAFVRAQAVDSHVRT). Residues 206–225 (FFTAFLTVEVAVISAYFLVM) form a helical membrane-spanning segment. The Cytoplasmic portion of the chain corresponds to 226–268 (SQPKFKDFSRENLVSRILSMASAVVPAVGRYQPLVTRALVYWN). The chain crosses the membrane as a helical span at residues 269–289 (GASIFVGDLMLMVFYFGITSV). Residues 290 to 292 (LGN) lie on the Lumenal side of the membrane.

The protein belongs to the GET2 family. As to quaternary structure, component of the Golgi to ER traffic (GET) complex, which is composed of GET1, GET2 and GET3. Within the complex, GET1 and GET2 form a heterotetramer which is stabilized by phosphatidylinositol binding and which binds to the GET3 homodimer.

Its subcellular location is the endoplasmic reticulum membrane. The protein localises to the golgi apparatus membrane. Functionally, required for the post-translational delivery of tail-anchored (TA) proteins to the endoplasmic reticulum. Together with GET1, acts as a membrane receptor for soluble GET3, which recognizes and selectively binds the transmembrane domain of TA proteins in the cytosol. The GET complex cooperates with the HDEL receptor ERD2 to mediate the ATP-dependent retrieval of resident ER proteins that contain a C-terminal H-D-E-L retention signal from the Golgi to the ER. The protein is Golgi to ER traffic protein 2 of Clavispora lusitaniae (strain ATCC 42720) (Yeast).